Consider the following 210-residue polypeptide: Peroxynitrite isomerase (210 aa).

Positions 21–27 (GQWEGQG) match the GXWXGXG motif. His190 is a heme b binding site.

This sequence belongs to the nitrobindin family. Homodimer. The cofactor is heme b.

The catalysed reaction is peroxynitrite = nitrate. Its pathway is nitrogen metabolism. Heme-binding protein able to scavenge peroxynitrite and to protect free L-tyrosine against peroxynitrite-mediated nitration, by acting as a peroxynitrite isomerase that converts peroxynitrite to nitrate. Therefore, this protein likely plays a role in peroxynitrite sensing and in the detoxification of reactive nitrogen and oxygen species (RNS and ROS, respectively). Is able to bind nitric oxide (NO) in vitro, but may act as a sensor of peroxynitrite levels in vivo. The sequence is that of Peroxynitrite isomerase from Renibacterium salmoninarum (strain ATCC 33209 / DSM 20767 / JCM 11484 / NBRC 15589 / NCIMB 2235).